The sequence spans 186 residues: Large ribosomal subunit protein uL10 (186 aa).

Belongs to the universal ribosomal protein uL10 family. Part of the ribosomal stalk of the 50S ribosomal subunit. The N-terminus interacts with L11 and the large rRNA to form the base of the stalk. The C-terminus forms an elongated spine to which L12 dimers bind in a sequential fashion forming a multimeric L10(L12)X complex.

In terms of biological role, forms part of the ribosomal stalk, playing a central role in the interaction of the ribosome with GTP-bound translation factors. This Nitrosococcus oceani (strain ATCC 19707 / BCRC 17464 / JCM 30415 / NCIMB 11848 / C-107) protein is Large ribosomal subunit protein uL10.